A 325-amino-acid chain; its full sequence is Elongation factor P--(R)-beta-lysine ligase (325 aa).

76 to 78 lines the substrate pocket; the sequence is SPE. ATP-binding positions include 100–102 and Asn-109; that span reads RNE. Tyr-118 is a substrate binding site. ATP is bound at residue 244-245; it reads EL. Glu-251 contacts substrate. Gly-300 is a binding site for ATP.

The protein belongs to the class-II aminoacyl-tRNA synthetase family. EpmA subfamily. As to quaternary structure, homodimer.

The enzyme catalyses D-beta-lysine + L-lysyl-[protein] + ATP = N(6)-((3R)-3,6-diaminohexanoyl)-L-lysyl-[protein] + AMP + diphosphate + H(+). Functionally, with EpmB is involved in the beta-lysylation step of the post-translational modification of translation elongation factor P (EF-P). Catalyzes the ATP-dependent activation of (R)-beta-lysine produced by EpmB, forming a lysyl-adenylate, from which the beta-lysyl moiety is then transferred to the epsilon-amino group of a conserved specific lysine residue in EF-P. The polypeptide is Elongation factor P--(R)-beta-lysine ligase (Citrobacter koseri (strain ATCC BAA-895 / CDC 4225-83 / SGSC4696)).